The following is a 404-amino-acid chain: Double-stranded RNA-binding protein 5 (404 aa).

2 DRBM domains span residues 1-70 and 87-155; these read MYKN…RLSL and VYKN…SLKQ. Disordered regions lie at residues 195-236, 263-320, and 336-362; these read RRRR…STEE, GGRT…RRNA, and RRRP…FSDP. The span at 263 to 280 shows a compositional bias: low complexity; it reads GGRTQDTASPAPAAAAAS. A compositionally biased stretch (basic residues) spans 302 to 316; sequence AGAHAARRHAARQGG.

Its function is as follows. Binds double-stranded RNA. This Oryza sativa subsp. japonica (Rice) protein is Double-stranded RNA-binding protein 5 (DRB5).